A 361-amino-acid chain; its full sequence is MVSLIKSIKAHSDKAWSVSAHKTVPLLATASTDKTSKIYKLSVKQNFPQVAQLEDTHKRSVRAVSFKPPLPGVESNFLDLPALASGSFDSTISIWGIDEPETEILSSPRNEWNLMAIIEGHENEIKAVGWNHNGSLLASCSRDKTVWIWETDPETLEEFECISVLNDHQHDIKHVVWHPHQNLLASSSYDDTIRLYKQDLDDDDWSCVGVLNGHEGTVWCSQFEDNHRHQESNESSNRSKIRLVSVSDDMTARIWSKYIPSSIKHKSEMVWEQESILPPVHQYPIYSVAWSAQSGKIATVGSDGKIVIYIEGDDNSWSIDSVKESAHGVHEINSIIWALLDDQSEVLVTAGDDGCVNIWKP.

WD repeat units follow at residues 10–49 (AHSD…NFPQ), 56–105 (THKR…TEIL), 120–160 (GHEN…EEFE), 167–206 (DHQH…DDWS), 213–265 (GHEG…SIKH), 280–319 (VHQY…SWSI), and 327–361 (HGVH…IWKP).

This sequence belongs to the WD repeat CIA1 family. Interacts with NAR1.

It localises to the cytoplasm. Its subcellular location is the nucleus. Its function is as follows. Essential component of the cytosolic iron-sulfur (Fe/S) protein assembly machinery. Required for the maturation of extramitochondrial Fe/S proteins. This chain is Probable cytosolic iron-sulfur protein assembly protein 1, found in Scheffersomyces stipitis (strain ATCC 58785 / CBS 6054 / NBRC 10063 / NRRL Y-11545) (Yeast).